Reading from the N-terminus, the 944-residue chain is ATP-dependent helicase fft1 (944 aa).

Disordered stretches follow at residues 89-109 (AAYD…ESSN) and 174-246 (SAQK…NSIP). A compositionally biased stretch (basic and acidic residues) spans 92 to 108 (DPHDQPPERDVSLKESS). Positions 174 to 184 (SAQKLNNQPIE) are enriched in polar residues. Basic and acidic residues predominate over residues 186–203 (SSVDKENAKRKRYVEEGT). Residues 217–227 (LSDEETNEDDL) show a composition bias toward acidic residues. A compositionally biased stretch (polar residues) spans 230–246 (QSPTACTTDANIDNSIP). The 167-residue stretch at 426–592 (CLMYKAKLSG…ISLLAFMLPK (167 aa)) folds into the Helicase ATP-binding domain. Residue 439-446 (DEMGLGKT) coordinates ATP. Positions 543–546 (DEGH) match the DEGH box motif. The region spanning 766–923 (KVKKLCSLLK…DSEKIQKEIS (158 aa)) is the Helicase C-terminal domain.

This sequence belongs to the SNF2/RAD54 helicase family.

It is found in the nucleus. The enzyme catalyses ATP + H2O = ADP + phosphate + H(+). Its function is as follows. DNA helicase that possesses intrinsic ATP-dependent nucleosome-remodeling activity and is required for heterochromatin organization. The chain is ATP-dependent helicase fft1 (fft1) from Schizosaccharomyces pombe (strain 972 / ATCC 24843) (Fission yeast).